The chain runs to 81 residues: Photosystem I iron-sulfur center (81 aa).

4Fe-4S ferredoxin-type domains follow at residues serine 2–tryptophan 31 and glycine 37–tyrosine 68. [4Fe-4S] cluster contacts are provided by cysteine 11, cysteine 14, cysteine 17, cysteine 21, cysteine 48, cysteine 51, cysteine 54, and cysteine 58.

As to quaternary structure, the eukaryotic PSI reaction center is composed of at least 11 subunits. [4Fe-4S] cluster is required as a cofactor.

The protein resides in the plastid. It localises to the chloroplast thylakoid membrane. The enzyme catalyses reduced [plastocyanin] + hnu + oxidized [2Fe-2S]-[ferredoxin] = oxidized [plastocyanin] + reduced [2Fe-2S]-[ferredoxin]. Its function is as follows. Apoprotein for the two 4Fe-4S centers FA and FB of photosystem I (PSI); essential for photochemical activity. FB is the terminal electron acceptor of PSI, donating electrons to ferredoxin. The C-terminus interacts with PsaA/B/D and helps assemble the protein into the PSI complex. Required for binding of PsaD and PsaE to PSI. PSI is a plastocyanin/cytochrome c6-ferredoxin oxidoreductase, converting photonic excitation into a charge separation, which transfers an electron from the donor P700 chlorophyll pair to the spectroscopically characterized acceptors A0, A1, FX, FA and FB in turn. This Phaeodactylum tricornutum (strain CCAP 1055/1) protein is Photosystem I iron-sulfur center.